The chain runs to 109 residues: Small ribosomal subunit protein bS16 (109 aa).

The tract at residues 87-109 (ALRETPKKSAPKAKAQERAKAAG) is disordered. Basic and acidic residues predominate over residues 100-109 (KAQERAKAAG).

This sequence belongs to the bacterial ribosomal protein bS16 family.

This is Small ribosomal subunit protein bS16 from Rhodospirillum centenum (strain ATCC 51521 / SW).